The sequence spans 180 residues: UPF0149 protein XOO1028 (180 aa).

It belongs to the UPF0149 family.

In Xanthomonas oryzae pv. oryzae (strain MAFF 311018), this protein is UPF0149 protein XOO1028.